We begin with the raw amino-acid sequence, 602 residues long: Elongation factor 4 (602 aa).

A tr-type G domain is found at 7–189 (KFIRNFSIIA…QLVVAIPPPV (183 aa)). GTP-binding positions include 19 to 24 (DHGKST) and 136 to 139 (NKID).

It belongs to the TRAFAC class translation factor GTPase superfamily. Classic translation factor GTPase family. LepA subfamily.

The protein localises to the cell inner membrane. It catalyses the reaction GTP + H2O = GDP + phosphate + H(+). In terms of biological role, required for accurate and efficient protein synthesis under certain stress conditions. May act as a fidelity factor of the translation reaction, by catalyzing a one-codon backward translocation of tRNAs on improperly translocated ribosomes. Back-translocation proceeds from a post-translocation (POST) complex to a pre-translocation (PRE) complex, thus giving elongation factor G a second chance to translocate the tRNAs correctly. Binds to ribosomes in a GTP-dependent manner. This is Elongation factor 4 from Coxiella burnetii (strain RSA 493 / Nine Mile phase I).